Reading from the N-terminus, the 73-residue chain is Putative membrane protein insertion efficiency factor (73 aa).

This sequence belongs to the UPF0161 family.

It is found in the cell inner membrane. Functionally, could be involved in insertion of integral membrane proteins into the membrane. The protein is Putative membrane protein insertion efficiency factor of Dinoroseobacter shibae (strain DSM 16493 / NCIMB 14021 / DFL 12).